A 1717-amino-acid chain; its full sequence is DNA-directed RNA polymerase I subunit RPA1 (1717 aa).

Residues Cys64, Cys67, Cys74, His77, Cys104, and Cys107 each coordinate Zn(2+). The interval 110-201 (LTCPRAAIYL…VAQFWKTHMA (92 aa)) is clamp. Residues Cys205 and Cys208 each contribute to the Zn(2+) site. The segment at 327–433 (FTNGQTVNLQ…IRQILEKKEG (107 aa)) is clamp. The interval 410-423 (DSEMDKLMLEKYPG) is rudder. 3 residues coordinate DNA: Lys431, Arg436, and Arg443. Residues 475-549 (YPQPVTPWNV…QGTKVVCRHV (75 aa)) are involved in RRN3 binding to Pol I complex. Arg559 is a binding site for RNA. Mg(2+)-binding residues include Asp595, Asp597, and Asp599. Asp599 lines the RNA pocket. The interval 812–890 (KPNADVVRQR…NEINKACMPL (79 aa)) is funnel. The segment at 967 to 1008 (RPPEFFFHCMAGREGLVDTAVKTSRSGYLQRCIIKHLEGLVI) is bridging helix. The segment at 1067 to 1162 (ADPQKVLGHI…SLSVWRPDIY (96 aa)) is mediates the interaction with TOP2A. The interval 1214-1255 (PGEAVGLLAAQSIGEPSTQMTLNTFHFAGRGEMNVTLGIPRL) is trigger loop. Arg1256 provides a ligand contact to DNA. Residues 1372–1493 (RNVNSRRATQ…RRHSRPQGAE (122 aa)) form a disordered region. Over residues 1380 to 1397 (TQKDLNDTEDSGRSQREE) the composition is skewed to basic and acidic residues. At Ser1393 the chain carries Phosphoserine. 2 stretches are compositionally biased toward acidic residues: residues 1398–1419 (ERDE…DADA) and 1429–1450 (EEEV…EVQE). The span at 1452–1464 (GNIKGDGVHQGHE) shows a compositional bias: basic and acidic residues. The segment covering 1465-1477 (PDEEEHLGLEEEE) has biased composition (acidic residues).

It belongs to the RNA polymerase beta' chain family. Component of the RNA polymerase I (Pol I) complex consisting of 13 subunits: a ten-subunit catalytic core composed of POLR1A/RPA1, POLR1B/RPA2, POLR1C/RPAC1, POLR1D/RPAC2, POLR1H/RPA12, POLR2E/RPABC1, POLR2F/RPABC2, POLR2H/RPABC3, POLR2K/RPABC4 and POLR2L/RPABC5; a mobile stalk subunit POLR1F/RPA43 protruding from the core and additional subunits homologous to general transcription factors POLR1E/RPA49 and POLR1G/RPA34. Part of Pol I pre-initiation complex (PIC), in which Pol I core assembles with RRN3 and promoter-bound UTBF and SL1/TIF-IB complex. Interacts (via dock II domain) with TOP2A; this interaction may assist Pol I transcription initiation by releasing supercoils occurring during DNA unwinding. Interacts with CAVIN1; this interaction induces the dissociation of Pol I complex paused at rDNA terminator sequences. Interacts with MYO1C. Interacts with ERBB2. Interacts with DDX11. Interacts with RECQL5. Mg(2+) is required as a cofactor. In terms of processing, phosphorylated.

Its subcellular location is the nucleus. The protein localises to the nucleolus. The protein resides in the chromosome. It catalyses the reaction RNA(n) + a ribonucleoside 5'-triphosphate = RNA(n+1) + diphosphate. In terms of biological role, catalytic core component of RNA polymerase I (Pol I), a DNA-dependent RNA polymerase which synthesizes ribosomal RNA precursors using the four ribonucleoside triphosphates as substrates. Transcribes 47S pre-rRNAs from multicopy rRNA gene clusters, giving rise to 5.8S, 18S and 28S ribosomal RNAs. Pol I-mediated transcription cycle proceeds through transcription initiation, transcription elongation and transcription termination stages. During transcription initiation, Pol I pre-initiation complex (PIC) is recruited by the selectivity factor 1 (SL1/TIF-IB) complex bound to the core promoter that precedes an rDNA repeat unit. The PIC assembly bends the promoter favoring the formation of the transcription bubble and promoter escape. Once the polymerase has escaped from the promoter it enters the elongation phase during which RNA is actively polymerized, based on complementarity with the template DNA strand. Highly processive, assembles in structures referred to as 'Miller trees' where many elongating Pol I complexes queue and transcribe the same rDNA coding regions. At terminator sequences downstream of the rDNA gene, PTRF interacts with Pol I and halts Pol I transcription leading to the release of the RNA transcript and polymerase from the DNA. Forms Pol I active center together with the second largest subunit POLR1B/RPA2. Appends one nucleotide at a time to the 3' end of the nascent RNA, with POLR1A/RPA1 contributing a Mg(2+)-coordinating DxDGD motif, and POLR1B/RPA2 participating in the coordination of a second Mg(2+) ion and providing lysine residues believed to facilitate Watson-Crick base pairing between the incoming nucleotide and the template base. Typically, Mg(2+) ions direct a 5' nucleoside triphosphate to form a phosphodiester bond with the 3' hydroxyl of the preceding nucleotide of the nascent RNA, with the elimination of pyrophosphate. Has proofreading activity: Pauses and backtracks to allow the cleavage of a missincorporated nucleotide via POLR1H/RPA12. High Pol I processivity is associated with decreased transcription fidelity. The protein is DNA-directed RNA polymerase I subunit RPA1 of Mus musculus (Mouse).